A 380-amino-acid chain; its full sequence is Homoserine O-succinyltransferase (380 aa).

Positions 51 to 362 (NAVLICHALS…SKHGHDAFLL (312 aa)) constitute an AB hydrolase-1 domain. Catalysis depends on Ser-157, which acts as the Nucleophile. Arg-227 is a binding site for substrate. Active-site residues include Asp-324 and His-357. Position 358 (Asp-358) interacts with substrate.

The protein belongs to the AB hydrolase superfamily. MetX family. As to quaternary structure, homodimer.

The protein localises to the cytoplasm. The catalysed reaction is L-homoserine + succinyl-CoA = O-succinyl-L-homoserine + CoA. Its pathway is amino-acid biosynthesis; L-methionine biosynthesis via de novo pathway; O-succinyl-L-homoserine from L-homoserine: step 1/1. In terms of biological role, transfers a succinyl group from succinyl-CoA to L-homoserine, forming succinyl-L-homoserine. The sequence is that of Homoserine O-succinyltransferase from Cellvibrio japonicus (strain Ueda107) (Pseudomonas fluorescens subsp. cellulosa).